Here is a 620-residue protein sequence, read N- to C-terminus: Chaperone protein DnaK (620 aa).

Phosphothreonine; by autocatalysis is present on Thr197. The disordered stretch occupies residues 591-620; sequence AQKLGEAMANKNNAEQPKKKDDDVIDAEVE.

This sequence belongs to the heat shock protein 70 family.

Acts as a chaperone. This Helicobacter pylori (strain HPAG1) protein is Chaperone protein DnaK.